The chain runs to 347 residues: Ferrochelatase (347 aa).

A [2Fe-2S] cluster-binding site is contributed by C158. Fe cation-binding residues include H193 and E272. C332, C339, and C341 together coordinate [2Fe-2S] cluster.

The protein belongs to the ferrochelatase family. In terms of assembly, homodimer. [2Fe-2S] cluster serves as cofactor.

It is found in the cytoplasm. The enzyme catalyses heme b + 2 H(+) = protoporphyrin IX + Fe(2+). It participates in porphyrin-containing compound metabolism; protoheme biosynthesis; protoheme from protoporphyrin-IX: step 1/1. Catalyzes the ferrous insertion into protoporphyrin IX. The chain is Ferrochelatase from Caulobacter vibrioides (strain ATCC 19089 / CIP 103742 / CB 15) (Caulobacter crescentus).